The primary structure comprises 123 residues: Sirohydrochlorin cobaltochelatase (123 aa).

The active-site Proton acceptor is His9. His9 contacts Co(2+). Substrate is bound by residues Glu43 and 68-73 (FAAGMH). His73 lines the Co(2+) pocket.

The protein belongs to the CbiX family. CbiXS subfamily. Homotetramer; dimer of dimers.

It catalyses the reaction Co-sirohydrochlorin + 2 H(+) = sirohydrochlorin + Co(2+). It functions in the pathway cofactor biosynthesis; adenosylcobalamin biosynthesis; cob(II)yrinate a,c-diamide from sirohydrochlorin (anaerobic route): step 1/10. Its function is as follows. Catalyzes the insertion of Co(2+) into sirohydrochlorin as part of the anaerobic pathway to cobalamin biosynthesis. This chain is Sirohydrochlorin cobaltochelatase, found in Sulfolobus acidocaldarius (strain ATCC 33909 / DSM 639 / JCM 8929 / NBRC 15157 / NCIMB 11770).